Consider the following 102-residue polypeptide: Protamine-2 (102 aa).

A disordered region spans residues 1–102 (MVRCRVRSPS…RTRRRTCRRH (102 aa)). 3 positions are modified to phosphoserine: Ser8, Ser10, and Ser37. Over residues 8–17 (SPSERSHEVY) the composition is skewed to basic and acidic residues. The span at 39-48 (EHVEVYERTH) shows a compositional bias: basic and acidic residues. The segment covering 49–102 (GHSHYRRRHCSRRRLRRIHRQQHRSCRRRKRRSCRHRRRHRKGCRTRRRTCRRH) has biased composition (basic residues).

Belongs to the protamine P2 family. As to quaternary structure, interacts with TDRP. Proteolytic processing into mature chains is required for histone eviction during spermatogenesis. Transition proteins (TNP1 and TNP2) are required for processing. Testis.

Its subcellular location is the nucleus. It localises to the chromosome. Functionally, protamines substitute for histones in the chromatin of sperm during the haploid phase of spermatogenesis. They compact sperm DNA into a highly condensed, stable and inactive complex. This Gorilla gorilla gorilla (Western lowland gorilla) protein is Protamine-2 (PRM2).